A 156-amino-acid chain; its full sequence is Small ribosomal subunit protein uS7 (156 aa).

The protein belongs to the universal ribosomal protein uS7 family. Part of the 30S ribosomal subunit. Contacts proteins S9 and S11.

One of the primary rRNA binding proteins, it binds directly to 16S rRNA where it nucleates assembly of the head domain of the 30S subunit. Is located at the subunit interface close to the decoding center, probably blocks exit of the E-site tRNA. The sequence is that of Small ribosomal subunit protein uS7 from Methylobacterium nodulans (strain LMG 21967 / CNCM I-2342 / ORS 2060).